The chain runs to 157 residues: Large ribosomal subunit protein uL11 (157 aa).

The protein belongs to the universal ribosomal protein uL11 family. As to quaternary structure, part of the ribosomal stalk of the 50S ribosomal subunit. Interacts with L10 and the large rRNA to form the base of the stalk. L10 forms an elongated spine to which L12 dimers bind in a sequential fashion forming a multimeric L10(L12)X complex.

Forms part of the ribosomal stalk which helps the ribosome interact with GTP-bound translation factors. The polypeptide is Large ribosomal subunit protein uL11 (Methanocorpusculum labreanum (strain ATCC 43576 / DSM 4855 / Z)).